The chain runs to 156 residues: Small ribosomal subunit protein uS7 (156 aa).

Belongs to the universal ribosomal protein uS7 family. Part of the 30S ribosomal subunit. Contacts proteins S9 and S11.

Its function is as follows. One of the primary rRNA binding proteins, it binds directly to 16S rRNA where it nucleates assembly of the head domain of the 30S subunit. Is located at the subunit interface close to the decoding center, probably blocks exit of the E-site tRNA. The polypeptide is Small ribosomal subunit protein uS7 (Yersinia enterocolitica serotype O:8 / biotype 1B (strain NCTC 13174 / 8081)).